Reading from the N-terminus, the 448-residue chain is Cysteine--tRNA ligase (448 aa).

A Zn(2+)-binding site is contributed by cysteine 29. A 'HIGH' region motif is present at residues 31-41 (PTVYDTAHIGN). Residues 79 to 91 (ATTGADRGADQAH) show a composition bias toward basic and acidic residues. The segment at 79–106 (ATTGADRGADQAHRGPLPRRHGPLNAAP) is disordered. Zn(2+)-binding residues include cysteine 206 and glutamate 235. The 'KMSKS' region signature appears at 265–269 (RMSKS). Residue lysine 268 coordinates ATP.

This sequence belongs to the class-I aminoacyl-tRNA synthetase family. In terms of assembly, monomer. Zn(2+) serves as cofactor.

It is found in the cytoplasm. It carries out the reaction tRNA(Cys) + L-cysteine + ATP = L-cysteinyl-tRNA(Cys) + AMP + diphosphate. This chain is Cysteine--tRNA ligase (cysS), found in Azospirillum brasilense.